The sequence spans 360 residues: Peptide chain release factor 1 (360 aa).

Position 235 is an N5-methylglutamine (Gln235). The tract at residues 284–313 (AKRQQAEASTRRNLLGSGDRSDRNRTYNFP) is disordered.

It belongs to the prokaryotic/mitochondrial release factor family. In terms of processing, methylated by PrmC. Methylation increases the termination efficiency of RF1.

The protein resides in the cytoplasm. Peptide chain release factor 1 directs the termination of translation in response to the peptide chain termination codons UAG and UAA. The chain is Peptide chain release factor 1 from Salmonella arizonae (strain ATCC BAA-731 / CDC346-86 / RSK2980).